The sequence spans 232 residues: MQKYALHAYPVMALMVATLTGCAWIPAKPLVQGATTAQPIPGPVPVANGSIFQSAQPINYGYQPLFEDRRPRNIGDTLTIVLQENVSASKSSSANASRDGKTSFGFDTVPRYLQGLFGNSRADMEASGGNSFNGKGGANASNTFSGTLTVTVDQVLANGNLHVVGEKQIAINQGTEFIRFSGVVNPRTISGSNSVPSTQVADARIEYVGNGYINEAQNMGWLQRFFLNLSPM.

A signal peptide spans 1–21; it reads MQKYALHAYPVMALMVATLTG. Residue cysteine 22 is the site of N-palmitoyl cysteine attachment. The S-diacylglycerol cysteine moiety is linked to residue cysteine 22.

The protein belongs to the FlgH family. As to quaternary structure, the basal body constitutes a major portion of the flagellar organelle and consists of four rings (L,P,S, and M) mounted on a central rod.

It localises to the cell outer membrane. The protein resides in the bacterial flagellum basal body. Assembles around the rod to form the L-ring and probably protects the motor/basal body from shearing forces during rotation. This chain is Flagellar L-ring protein, found in Salmonella choleraesuis (strain SC-B67).